Consider the following 123-residue polypeptide: uncharacterized protein (123 aa).

Helical transmembrane passes span 9–31, 38–56, 67–91, and 98–114; these read LLLR…WISF, VLTL…VFAV, VIAV…AALY, and VSIV…IISA.

It to E.coli YhgE.

Its subcellular location is the cell membrane. This is an uncharacterized protein from Bacillus subtilis (strain 168).